The sequence spans 332 residues: L-lactate dehydrogenase A chain (332 aa).

NAD(+) is bound by residues G29–K57 and R99. Residues R106, N138, and R169 each contribute to the substrate site. Residue N138 participates in NAD(+) binding. The active-site Proton acceptor is the H193. Position 248 (T248) interacts with substrate.

Belongs to the LDH/MDH superfamily. LDH family. In terms of assembly, homotetramer.

Its subcellular location is the cytoplasm. It carries out the reaction (S)-lactate + NAD(+) = pyruvate + NADH + H(+). The protein operates within fermentation; pyruvate fermentation to lactate; (S)-lactate from pyruvate: step 1/1. Functionally, interconverts simultaneously and stereospecifically pyruvate and lactate with concomitant interconversion of NADH and NAD(+). The polypeptide is L-lactate dehydrogenase A chain (LDHA) (Sceloporus woodi (Florida scrub lizard)).